The following is a 982-amino-acid chain: Presequence protease, mitochondrial (982 aa).

A mitochondrion-targeting transit peptide spans 1–7 (MFQIRNY). His84 is a binding site for Zn(2+). The active-site Proton acceptor is the Glu87. Residue His88 participates in Zn(2+) binding. Glu160 is a catalytic residue. A Zn(2+)-binding site is contributed by Glu185.

This sequence belongs to the peptidase M16 family. PreP subfamily. Monomer and homodimer; homodimerization is induced by binding of the substrate. Zn(2+) serves as cofactor.

The protein localises to the mitochondrion intermembrane space. Its subcellular location is the mitochondrion matrix. Its function is as follows. Degrades mitochondrial transit peptides after their cleavage in the intermembrane space or in the matrix, and presequence peptides; clearance of these peptides is required to keep the presequence processing machinery running. Preferentially cleaves the N-terminal side of paired basic amino acid residues. Also degrades other unstructured peptides. May function as an ATP-dependent peptidase as opposed to a metalloendopeptidase. This Kluyveromyces lactis (strain ATCC 8585 / CBS 2359 / DSM 70799 / NBRC 1267 / NRRL Y-1140 / WM37) (Yeast) protein is Presequence protease, mitochondrial (CYM1).